Reading from the N-terminus, the 260-residue chain is Proteasome subunit alpha type-1 (260 aa).

The segment at 231–260 (FLEGLEERPQRKPALPADEPAEKAEEPMEH) is disordered. The span at 250–260 (PAEKAEEPMEH) shows a compositional bias: basic and acidic residues.

The protein belongs to the peptidase T1A family. The 26S proteasome consists of a 20S proteasome core and two 19S regulatory subunits. The 20S proteasome core is a barrel-shaped complex made of 28 subunits that are arranged in four stacked rings. The two outer rings are each formed by seven alpha subunits, and the two inner rings are formed by seven beta subunits. The proteolytic activity is exerted by three beta-subunits PSMB5, PSMB6 and PSMB7.

The protein localises to the cytoplasm. Its subcellular location is the nucleus. Component of the 20S core proteasome complex involved in the proteolytic degradation of most intracellular proteins. This complex plays numerous essential roles within the cell by associating with different regulatory particles. Associated with two 19S regulatory particles, forms the 26S proteasome and thus participates in the ATP-dependent degradation of ubiquitinated proteins. The 26S proteasome plays a key role in the maintenance of protein homeostasis by removing misfolded or damaged proteins that could impair cellular functions, and by removing proteins whose functions are no longer required. Associated with the PA200 or PA28, the 20S proteasome mediates ubiquitin-independent protein degradation. This type of proteolysis is required in several pathways including spermatogenesis (20S-PA200 complex) or generation of a subset of MHC class I-presented antigenic peptides (20S-PA28 complex). This is Proteasome subunit alpha type-1 (PSMA1) from Gallus gallus (Chicken).